A 365-amino-acid polypeptide reads, in one-letter code: tRNA(Met) cytidine acetate ligase (365 aa).

ATP contacts are provided by residues 7-20, G96, N152, and R175; that span reads IAEFNPFHNGHKYL.

It belongs to the TmcAL family.

It is found in the cytoplasm. It catalyses the reaction cytidine(34) in elongator tRNA(Met) + acetate + ATP = N(4)-acetylcytidine(34) in elongator tRNA(Met) + AMP + diphosphate. In terms of biological role, catalyzes the formation of N(4)-acetylcytidine (ac(4)C) at the wobble position of elongator tRNA(Met), using acetate and ATP as substrates. First activates an acetate ion to form acetyladenylate (Ac-AMP) and then transfers the acetyl group to tRNA to form ac(4)C34. The sequence is that of tRNA(Met) cytidine acetate ligase from Streptococcus pneumoniae (strain Hungary19A-6).